We begin with the raw amino-acid sequence, 62 residues long: MDMKKLIERINFLYKKSKEEGLTEEEKIEQQKLRREYIDIIKGNVKVQLEGVEKIPTPNRRN.

Belongs to the UPF0291 family.

The protein resides in the cytoplasm. This is UPF0291 protein CLK_1994 from Clostridium botulinum (strain Loch Maree / Type A3).